Consider the following 202-residue polypeptide: Endothelin-1 (202 aa).

The signal sequence occupies residues 1 to 25 (MDYFPVIFSLLFVAFQGAPETAVLG). The propeptide occupies 26 to 50 (AELSPRAEKEVQSPPPSTSWRPRRS). The disordered stretch occupies residues 28-47 (LSPRAEKEVQSPPPSTSWRP). 2 cysteine pairs are disulfide-bonded: C53–C67 and C55–C63. The propeptide occupies 74–202 (VNTPERVVPY…DQKLIHNRAH (129 aa)). The segment at 110 to 124 (CQCAHQKDKKCWNFC) is endothelin-like.

The protein belongs to the endothelin/sarafotoxin family.

The protein localises to the secreted. Endothelins are endothelium-derived vasoconstrictor peptides. Probable ligand for G-protein coupled receptors EDNRA and EDNRB which activates PTK2B, BCAR1, BCAR3 and, GTPases RAP1 and RHOA cascade in glomerular mesangial cells. Also binds the DEAR/FBXW7-AS1 receptor. Promotes mesenteric arterial wall remodeling via activation of ROCK signaling and subsequent colocalization of NFATC3 with F-actin filaments. NFATC3 then translocates to the nucleus where it subsequently promotes the transcription of the smooth muscle hypertrophy and differentiation marker ACTA2. This is Endothelin-1 (Edn1) from Rattus norvegicus (Rat).